A 605-amino-acid polypeptide reads, in one-letter code: Elongation factor 4 (605 aa).

The tr-type G domain maps to 11–193 (KRIRNFSIIA…QIVTRISPPQ (183 aa)). GTP-binding positions include 23 to 28 (DHGKST) and 140 to 143 (NKVD).

Belongs to the TRAFAC class translation factor GTPase superfamily. Classic translation factor GTPase family. LepA subfamily.

Its subcellular location is the cell membrane. The enzyme catalyses GTP + H2O = GDP + phosphate + H(+). Functionally, required for accurate and efficient protein synthesis under certain stress conditions. May act as a fidelity factor of the translation reaction, by catalyzing a one-codon backward translocation of tRNAs on improperly translocated ribosomes. Back-translocation proceeds from a post-translocation (POST) complex to a pre-translocation (PRE) complex, thus giving elongation factor G a second chance to translocate the tRNAs correctly. Binds to ribosomes in a GTP-dependent manner. This Onion yellows phytoplasma (strain OY-M) protein is Elongation factor 4.